The sequence spans 1462 residues: Protein peg1 (1462 aa).

Disordered regions lie at residues 528-563 (SFSKSQKEETSSNSSNSSGTRRLGLPQRATPASRER) and 573-592 (FHSTSLPPSLPSGHSPSIAI). 2 stretches are compositionally biased toward low complexity: residues 538–552 (SSNSSNSSGTRRLGL) and 574–589 (HSTSLPPSLPSGHSPS). Ser-599 carries the phosphoserine modification. The interval 838–928 (SSTHQEHLSK…NCSEESLDDH (91 aa)) is disordered. Residues 847 to 866 (KNLPTLNTSSSSNSSQTDLL) show a composition bias toward low complexity. Residues 870–896 (GKGETKETEMQSPIESKEGLLSKDTHI) show a composition bias toward basic and acidic residues. Ser-1221 carries the post-translational modification Phosphoserine. The stretch at 1342–1367 (TLIAEIADLQGLYEFTQQRLQSLNTE) forms a coiled coil.

Belongs to the CLASP family. Interacts with microtubules. Interacts with dhc1, mal3 and tea1.

It localises to the cytoplasm. The protein resides in the cytoskeleton. The protein localises to the spindle. Its subcellular location is the microtubule organizing center. It is found in the spindle pole body. Its function is as follows. Microtubule binding protein that regulates the stability of dynamic microtubules. Required for mitotic spindle formation. This chain is Protein peg1 (peg1), found in Schizosaccharomyces pombe (strain 972 / ATCC 24843) (Fission yeast).